The primary structure comprises 386 residues: Succinate--CoA ligase [ADP-forming] subunit beta (386 aa).

The ATP-grasp domain maps to 9 to 244 (KEILRKYGVP…HDEEDPLETR (236 aa)). Residues Lys46, 53–55 (GRG), Glu99, Cys102, and Glu107 contribute to the ATP site. Asn199 and Asp213 together coordinate Mg(2+). Residues Asn264 and 321 to 323 (GIM) contribute to the substrate site.

This sequence belongs to the succinate/malate CoA ligase beta subunit family. In terms of assembly, heterotetramer of two alpha and two beta subunits. It depends on Mg(2+) as a cofactor.

It carries out the reaction succinate + ATP + CoA = succinyl-CoA + ADP + phosphate. It catalyses the reaction GTP + succinate + CoA = succinyl-CoA + GDP + phosphate. It functions in the pathway carbohydrate metabolism; tricarboxylic acid cycle; succinate from succinyl-CoA (ligase route): step 1/1. Functionally, succinyl-CoA synthetase functions in the citric acid cycle (TCA), coupling the hydrolysis of succinyl-CoA to the synthesis of either ATP or GTP and thus represents the only step of substrate-level phosphorylation in the TCA. The beta subunit provides nucleotide specificity of the enzyme and binds the substrate succinate, while the binding sites for coenzyme A and phosphate are found in the alpha subunit. The chain is Succinate--CoA ligase [ADP-forming] subunit beta from Rickettsia conorii (strain ATCC VR-613 / Malish 7).